Reading from the N-terminus, the 454-residue chain is Metacaspase-1A (454 aa).

Over residues 1–16 (MSYGYPGQGYGPGGGH) the composition is skewed to gly residues. The disordered stretch occupies residues 1 to 129 (MSYGYPGQGY…GHQTRNQGSH (129 aa)). Low complexity-rich tracts occupy residues 38-47 (YSNPGQGQYN), 59-80 (YHQQ…YPPQ), 88-101 (GQQQ…HSQR), and 109-120 (GYDIYGYPIGSG). Active-site residues include histidine 244 and cysteine 300.

The protein belongs to the peptidase C14B family.

Involved in cell death (apoptosis). This chain is Metacaspase-1A (casA), found in Neurospora crassa (strain ATCC 24698 / 74-OR23-1A / CBS 708.71 / DSM 1257 / FGSC 987).